The sequence spans 420 residues: Tyrosine--tRNA ligase (420 aa).

Tyrosine 39 serves as a coordination point for L-tyrosine. A 'HIGH' region motif is present at residues 44–53 (CTAPSLHIGS). Residues tyrosine 176 and glutamine 180 each coordinate L-tyrosine. The short motif at 236-240 (KMGKT) is the 'KMSKS' region element. Position 239 (lysine 239) interacts with ATP. The S4 RNA-binding domain occupies 349 to 414 (IPLIDLLYDT…AGKKRHIKIL (66 aa)).

The protein belongs to the class-I aminoacyl-tRNA synthetase family. TyrS type 1 subfamily. Homodimer.

It is found in the cytoplasm. It carries out the reaction tRNA(Tyr) + L-tyrosine + ATP = L-tyrosyl-tRNA(Tyr) + AMP + diphosphate + H(+). Functionally, catalyzes the attachment of tyrosine to tRNA(Tyr) in a two-step reaction: tyrosine is first activated by ATP to form Tyr-AMP and then transferred to the acceptor end of tRNA(Tyr). The sequence is that of Tyrosine--tRNA ligase from Wolbachia pipientis subsp. Culex pipiens (strain wPip).